The primary structure comprises 253 residues: Fatty acid elongase 5 (253 aa).

7 helical membrane-spanning segments follow: residues 24–44 (IFVS…LVII), 60–80 (IMMI…ISLA), 100–120 (FWIF…VLMI), 127–147 (QLSF…GLLL), 150–170 (GIGN…HFLM), 188–208 (ILTK…SLAP), and 214–234 (FALQ…ILFL). Residues 132–136 (HIYHH) carry the HxxHH motif motif. The active-site Nucleophile is His-135.

The protein belongs to the ELO family.

The protein localises to the membrane. The enzyme catalyses an acyl-CoA + malonyl-CoA + H(+) = a 3-oxoacyl-CoA + CO2 + CoA. It participates in lipid metabolism; polyunsaturated fatty acid biosynthesis. Involved in the synthesis of fatty acids. Elongates C20 polyunsaturated fatty acids (PUFAs) with a preference for n-6 PUFAs. This chain is Fatty acid elongase 5, found in Trypanosoma cruzi (strain CL Brener).